The primary structure comprises 399 residues: MKSVEEQLALIQRGADEILVEAELVAKLKRGQPLRIKAGFDPTAPDLHLGHTVLINKLRQFQDLGHQVIFLIGDFTGMIGDPSGKSVTRPPLTREQVLENAETYKSQVFKILDPAKTEVAFNSTWMDQLTPADFIRLASQYTVARMLERDDFSKRYASNQPIAIHEFLYPLVQGYDSVALKADVELGGTDQKFNLLMGRELQRAYGQEAQVILTMPLLEGLDGVKKMSKSLGNYIGIQEAPGVMYSKLVSIPDTLMWRYFELLSFRSLDEIDSFRKDVEAGANPRDIKIKLAEEIVARFHGEEAAASAHKSAGNRLKEGELPEDLPEIELSSPEDMPVASVLNKAGLVKNAAAARDLLGAGSVKVDGQVVDRTFMLALGETRVFQAGKKAFARITLKAE.

Positions 42–51 (PTAPDLHLGH) match the 'HIGH' region motif. The 'KMSKS' region signature appears at 226 to 230 (KMSKS). Lys229 is a binding site for ATP. In terms of domain architecture, S4 RNA-binding spans 336-396 (MPVASVLNKA…GKKAFARITL (61 aa)).

This sequence belongs to the class-I aminoacyl-tRNA synthetase family. TyrS type 2 subfamily. Homodimer.

The protein resides in the cytoplasm. It catalyses the reaction tRNA(Tyr) + L-tyrosine + ATP = L-tyrosyl-tRNA(Tyr) + AMP + diphosphate + H(+). Catalyzes the attachment of tyrosine to tRNA(Tyr) in a two-step reaction: tyrosine is first activated by ATP to form Tyr-AMP and then transferred to the acceptor end of tRNA(Tyr). The sequence is that of Tyrosine--tRNA ligase 2 from Pseudomonas aeruginosa (strain ATCC 15692 / DSM 22644 / CIP 104116 / JCM 14847 / LMG 12228 / 1C / PRS 101 / PAO1).